Here is a 257-residue protein sequence, read N- to C-terminus: Pyridoxine 5'-phosphate synthase (257 aa).

Asn6 is a binding site for 3-amino-2-oxopropyl phosphate. Residue 8–9 (DH) participates in 1-deoxy-D-xylulose 5-phosphate binding. Arg17 lines the 3-amino-2-oxopropyl phosphate pocket. His41 functions as the Proton acceptor in the catalytic mechanism. 1-deoxy-D-xylulose 5-phosphate-binding residues include Arg43 and His48. Residue Glu68 is the Proton acceptor of the active site. Thr98 lines the 1-deoxy-D-xylulose 5-phosphate pocket. His210 functions as the Proton donor in the catalytic mechanism. Residues Gly211 and 232–233 (GQ) each bind 3-amino-2-oxopropyl phosphate.

Belongs to the PNP synthase family. As to quaternary structure, homooctamer; tetramer of dimers.

It is found in the cytoplasm. The enzyme catalyses 3-amino-2-oxopropyl phosphate + 1-deoxy-D-xylulose 5-phosphate = pyridoxine 5'-phosphate + phosphate + 2 H2O + H(+). It functions in the pathway cofactor biosynthesis; pyridoxine 5'-phosphate biosynthesis; pyridoxine 5'-phosphate from D-erythrose 4-phosphate: step 5/5. Catalyzes the complicated ring closure reaction between the two acyclic compounds 1-deoxy-D-xylulose-5-phosphate (DXP) and 3-amino-2-oxopropyl phosphate (1-amino-acetone-3-phosphate or AAP) to form pyridoxine 5'-phosphate (PNP) and inorganic phosphate. The polypeptide is Pyridoxine 5'-phosphate synthase (Campylobacter jejuni subsp. jejuni serotype O:2 (strain ATCC 700819 / NCTC 11168)).